A 218-amino-acid chain; its full sequence is MSIQQNKRPVVIGVTGGSGSGKTTVSNKIYDQLHGQAIQIINQDTYYNDQSDMTMDERKAVNYDHPLAFDTDFLIKQLTDLRSNKAIEMPVYDYTQYTRSDKTVHVEPTDVIILEGILILDDERLRDLMDIKVYVDTDDDIRIIRRIQRDMVERGRSLDSIITQYLATVKPMYHQFVEPTKRYADIIVPEGGENQVAIDLLSTKIRDILVKRGHTELR.

Glycine 16–threonine 23 is a binding site for ATP.

This sequence belongs to the uridine kinase family.

The protein resides in the cytoplasm. The enzyme catalyses uridine + ATP = UMP + ADP + H(+). The catalysed reaction is cytidine + ATP = CMP + ADP + H(+). It functions in the pathway pyrimidine metabolism; CTP biosynthesis via salvage pathway; CTP from cytidine: step 1/3. The protein operates within pyrimidine metabolism; UMP biosynthesis via salvage pathway; UMP from uridine: step 1/1. The polypeptide is Uridine kinase (Limosilactobacillus reuteri (strain DSM 20016) (Lactobacillus reuteri)).